Here is a 600-residue protein sequence, read N- to C-terminus: 1-deoxy-D-xylulose-5-phosphate synthase (600 aa).

Thiamine diphosphate is bound by residues His57 and 98–100 (GHA). Residue Asp125 participates in Mg(2+) binding. Thiamine diphosphate is bound by residues 126–127 (AS), Asn155, Tyr264, and Glu343. A Mg(2+)-binding site is contributed by Asn155.

This sequence belongs to the transketolase family. DXPS subfamily. As to quaternary structure, homodimer. Requires Mg(2+) as cofactor. Thiamine diphosphate serves as cofactor.

The enzyme catalyses D-glyceraldehyde 3-phosphate + pyruvate + H(+) = 1-deoxy-D-xylulose 5-phosphate + CO2. It participates in metabolic intermediate biosynthesis; 1-deoxy-D-xylulose 5-phosphate biosynthesis; 1-deoxy-D-xylulose 5-phosphate from D-glyceraldehyde 3-phosphate and pyruvate: step 1/1. Catalyzes the acyloin condensation reaction between C atoms 2 and 3 of pyruvate and glyceraldehyde 3-phosphate to yield 1-deoxy-D-xylulose-5-phosphate (DXP). This Fusobacterium nucleatum subsp. nucleatum (strain ATCC 25586 / DSM 15643 / BCRC 10681 / CIP 101130 / JCM 8532 / KCTC 2640 / LMG 13131 / VPI 4355) protein is 1-deoxy-D-xylulose-5-phosphate synthase.